The primary structure comprises 360 residues: Phenylalanine--tRNA ligase alpha subunit (360 aa).

Glu-260 serves as a coordination point for Mg(2+).

Belongs to the class-II aminoacyl-tRNA synthetase family. Phe-tRNA synthetase alpha subunit type 1 subfamily. Tetramer of two alpha and two beta subunits. It depends on Mg(2+) as a cofactor.

Its subcellular location is the cytoplasm. The enzyme catalyses tRNA(Phe) + L-phenylalanine + ATP = L-phenylalanyl-tRNA(Phe) + AMP + diphosphate + H(+). This chain is Phenylalanine--tRNA ligase alpha subunit, found in Rhodopseudomonas palustris (strain BisB5).